Here is a 491-residue protein sequence, read N- to C-terminus: Cytosolic Fe-S cluster assembly factor NAR1 (491 aa).

8 residues coordinate [4Fe-4S] cluster: C20, C65, C68, C71, C177, C232, C414, and C418.

Belongs to the NARF family.

Component of the cytosolic Fe/S protein assembly machinery. Required for maturation of extramitochondrial Fe/S proteins. May play a role in the transfer of pre-assembled Fe/S clusters to target apoproteins. The sequence is that of Cytosolic Fe-S cluster assembly factor NAR1 (NAR1) from Yarrowia lipolytica (strain CLIB 122 / E 150) (Yeast).